The primary structure comprises 515 residues: Vacuolar fusion protein CCZ1 homolog A (515 aa).

It belongs to the CCZ1 family. In terms of assembly, interacts with MON1.

The protein resides in the endosome. It is found in the prevacuolar compartment. In terms of biological role, plays an important role in membrane trafficking through the secretory apparatus. In complex with MON1, acts as a guanine exchange factor (GEF) for RABG3F of the Rab7 protein family. Promotes the exchange of GDP to GTP, converting RABG3F from an inactive GDP-bound form into an active GTP-bound form. The RABG3F active form is involved in protein trafficking from prevacuolar compartments (PVCs) to vacuoles. May serve as a linker between Rab5 and Rab7 protein families in PVCs and mediate PVC maturation. The protein is Vacuolar fusion protein CCZ1 homolog A of Arabidopsis thaliana (Mouse-ear cress).